A 588-amino-acid chain; its full sequence is Proline--tRNA ligase (588 aa).

Belongs to the class-II aminoacyl-tRNA synthetase family. ProS type 1 subfamily. In terms of assembly, homodimer.

The protein localises to the cytoplasm. It catalyses the reaction tRNA(Pro) + L-proline + ATP = L-prolyl-tRNA(Pro) + AMP + diphosphate. In terms of biological role, catalyzes the attachment of proline to tRNA(Pro) in a two-step reaction: proline is first activated by ATP to form Pro-AMP and then transferred to the acceptor end of tRNA(Pro). As ProRS can inadvertently accommodate and process non-cognate amino acids such as alanine and cysteine, to avoid such errors it has two additional distinct editing activities against alanine. One activity is designated as 'pretransfer' editing and involves the tRNA(Pro)-independent hydrolysis of activated Ala-AMP. The other activity is designated 'posttransfer' editing and involves deacylation of mischarged Ala-tRNA(Pro). The misacylated Cys-tRNA(Pro) is not edited by ProRS. This Corynebacterium glutamicum (strain R) protein is Proline--tRNA ligase.